Consider the following 136-residue polypeptide: ATP synthase epsilon chain 2 (136 aa).

This sequence belongs to the ATPase epsilon chain family. As to quaternary structure, F-type ATPases have 2 components, CF(1) - the catalytic core - and CF(0) - the membrane proton channel. CF(1) has five subunits: alpha(3), beta(3), gamma(1), delta(1), epsilon(1). CF(0) has three main subunits: a, b and c.

It is found in the cell inner membrane. Functionally, produces ATP from ADP in the presence of a proton gradient across the membrane. In Nitrobacter hamburgensis (strain DSM 10229 / NCIMB 13809 / X14), this protein is ATP synthase epsilon chain 2.